A 408-amino-acid chain; its full sequence is Gustatory receptor 10a (408 aa).

Over 1–20 (MTSPDERKSFWERHEFKFYR) the chain is Cytoplasmic. Residues 21-38 (YGHVYALIYGQVVIDYVP) traverse the membrane as a helical segment. Topologically, residues 39 to 48 (QRALKRGVKV) are extracellular. The helical transmembrane segment at 49–69 (LLIAYGHLFSMLLIVVLPGYF) threads the bilayer. Topologically, residues 70–86 (CYHFRTLTDTLDRRLQL) are cytoplasmic. A helical transmembrane segment spans residues 87 to 107 (LFYVSFTNTAIKYATVIVTYV). The Extracellular segment spans residues 108–144 (ANTVHFEAINQRCTMQRTHLEFEFKNAPQEPKRPFEF). Residues 145 to 165 (FMYFKFCLINLMMMIQVCGIF) form a helical membrane-spanning segment. Residues 166-270 (AQYGEVGKGS…RESFRMHQFQ (105 aa)) are Cytoplasmic-facing. A helical membrane pass occupies residues 271–291 (LIGLMLSTLINNLTNFYTLFH). Residues 292–304 (MLAKQSLEEVSYP) lie on the Extracellular side of the membrane. A helical membrane pass occupies residues 305 to 325 (VVVGSVYATGFYIDTYIVALI). The Cytoplasmic portion of the chain corresponds to 326–381 (NEHIKLELEAVALTMRRFAEPREMDERLTREIEHLSLELLNYQPPMLCGLLHLDRR). A helical transmembrane segment spans residues 382–402 (LVYLIAVTAFSYFITLVQFDL). At 403–408 (YLRKKS) the chain is on the extracellular side.

The protein belongs to the insect chemoreceptor superfamily. Gustatory receptor (GR) family. Gr10a subfamily. Expressed in the medial aspect of the third antennal segment, and in neurons of the terminal external chemosensory organ of larvae.

The protein resides in the cell membrane. Functionally, probable gustatory receptor which mediates acceptance or avoidance behavior, depending on its substrates. This chain is Gustatory receptor 10a (Gr10a), found in Drosophila melanogaster (Fruit fly).